The sequence spans 141 residues: Globin, extracellular monomeric (141 aa).

Residues 1–141 (ECDALQRFKV…LGVITGAIHD (141 aa)) form the Globin domain. Cysteines 2 and 131 form a disulfide. A heme b-binding site is contributed by His-94.

Belongs to the globin family. As to quaternary structure, the giant hemoglobins of worms are formed of a monomeric subunit and a disulfide-bonded trimer. This subunit is monomeric.

The protein resides in the secreted. This chain is Globin, extracellular monomeric, found in Tubifex tubifex (Sludge worm).